The sequence spans 2234 residues: Bridge-like lipid transfer protein family member 2 (2234 aa).

The signal sequence occupies residues 1 to 31; it reads MPLFLSALLVLLLVALSALFLGRWLVVRLAT. The interval 29–108 is transmembrane domain; it reads LATRWCQRKL…LQKVSSLSAP (80 aa). S563 bears the Phosphoserine mark. The interval 1496–1529 is disordered; that stretch reads QMSAKKPKRGIPPSAQVPPHVSTPSFSGRPDKGS. A coiled-coil region spans residues 1814–1885; the sequence is ILHLQEAVRQ…LNILIRCFKD (72 aa). A phosphoserine mark is found at S1846 and S2090.

It belongs to the SABRE family.

It localises to the cell membrane. Its subcellular location is the endoplasmic reticulum membrane. The protein resides in the mitochondrion membrane. Its function is as follows. Tube-forming lipid transport protein which binds to phosphatidylinositols and affects phosphatidylinositol-4,5-bisphosphate (PtdIns-4,5-P2) distribution. The protein is Bridge-like lipid transfer protein family member 2 (Bltp2) of Mus musculus (Mouse).